A 695-amino-acid chain; its full sequence is Calcium-dependent serine proteinase (695 aa).

A signal peptide spans 1-21 (MGKSSEAWCIVLFSVFASFSA). The region spanning 22–136 (EPTMHGEILS…TGFAAYYAAI (115 aa)) is the CUB 1 domain. 4 disulfides stabilise this stretch: C71–C89, C141–C153, C149–C162, and C164–C177. Residues 137-178 (DVNECTDFTDVPCSHFCNNFIGGYFCSCPPEYFLHDDMRNCG) enclose the EGF-like; calcium-binding domain. N155 carries the (3R)-3-hydroxyasparagine modification. N-linked (GlcNAc...) asparagine glycosylation occurs at N180. 6 disulfides stabilise this stretch: C181/C208, C240/C257, C300/C347, C327/C360, C365/C410, and C392/C428. Residues 181–296 (CSGNVFTALI…KGWKLRYHGD (116 aa)) enclose the CUB 2 domain. Sushi domains are found at residues 298–362 (IPCP…RCQP) and 363–430 (VDCG…KCVP). N413 is a glycosylation site (N-linked (GlcNAc...) asparagine). The Peptidase S1 domain occupies 445-687 (IFGGFPAKIQ…YKDWILQTMQ (243 aa)). Active-site charge relay system residues include H482 and D536. Cystine bridges form between C602/C625 and C634/C666. The active-site Charge relay system is the S638.

This sequence belongs to the peptidase S1 family. As to quaternary structure, heterodimer, consisting of heavy and light chains with disulfide bonds. The heavy chain is expected to be a regulatory subunit and the light chain contains the catalytic site. In terms of processing, the iron and 2-oxoglutarate dependent 3-hydroxylation of aspartate and asparagine is (R) stereospecific within EGF domains.

It localises to the secreted. Its subcellular location is the extracellular space. It is found in the extracellular matrix. Capable of degrading extracellular matrix proteins. CASP degrades type I and IV collagen and fibronectin in the presence of calcium. This is Calcium-dependent serine proteinase from Mesocricetus auratus (Golden hamster).